A 474-amino-acid chain; its full sequence is MDYLPIFLKLRDLPCLIVGGGEVAVRKLGLLLDAGAAVTVIAASAEAVIVELADRGLIRLRTKVFEATDSEGFRLIIAATDDRAVNAAVATAARRHGIPVNVVDCPDLCDFIFPAIIDRSPVLVAVSTGGASPVLARQLRTRIETCIPSRFGTLARLAADLRERVRQAIPEPRARRHFWERTLEGPAAELALQGRAEDAERVLLEAADAAARQERPAWGSVALVGAGPGDPDLLTLRALRLIQEADVIVYDRLVSAEILALARRDARRIYAGKERSRHSIPQDDINALLANLAAEGNRVVRLKGGDPFIFGRGGEEIETLMACGIPFQVVPGITAASGCAAYAGIPLTHRAHAHACVFVAGHLKDGTLQDLDWSQLVQPHQTVVVYMGLQGLPQICAELIRHGAPPSRPAALIQQGTTRDQKVLTATLETLPDKVADAGIKAPTLIIIGEVVGLRKKLAWYRSRQETEGRSGNG.

The tract at residues 1–203 is precorrin-2 dehydrogenase /sirohydrochlorin ferrochelatase; sequence MDYLPIFLKL…GRAEDAERVL (203 aa). Residues 22-23 and 43-44 contribute to the NAD(+) site; these read EV and AS. The uroporphyrinogen-III C-methyltransferase stretch occupies residues 219-474; sequence GSVALVGAGP…QETEGRSGNG (256 aa). An S-adenosyl-L-methionine-binding site is contributed by Pro228. Catalysis depends on Asp251, which acts as the Proton acceptor. Residue Lys273 is the Proton donor of the active site. S-adenosyl-L-methionine contacts are provided by residues 304–306, Ile309, 334–335, Met387, and Gly416; these read GGD and TA.

In the N-terminal section; belongs to the precorrin-2 dehydrogenase / sirohydrochlorin ferrochelatase family. This sequence in the C-terminal section; belongs to the precorrin methyltransferase family.

It catalyses the reaction uroporphyrinogen III + 2 S-adenosyl-L-methionine = precorrin-2 + 2 S-adenosyl-L-homocysteine + H(+). It carries out the reaction precorrin-2 + NAD(+) = sirohydrochlorin + NADH + 2 H(+). The catalysed reaction is siroheme + 2 H(+) = sirohydrochlorin + Fe(2+). It functions in the pathway cofactor biosynthesis; adenosylcobalamin biosynthesis; precorrin-2 from uroporphyrinogen III: step 1/1. It participates in cofactor biosynthesis; adenosylcobalamin biosynthesis; sirohydrochlorin from precorrin-2: step 1/1. Its pathway is porphyrin-containing compound metabolism; siroheme biosynthesis; precorrin-2 from uroporphyrinogen III: step 1/1. The protein operates within porphyrin-containing compound metabolism; siroheme biosynthesis; siroheme from sirohydrochlorin: step 1/1. It functions in the pathway porphyrin-containing compound metabolism; siroheme biosynthesis; sirohydrochlorin from precorrin-2: step 1/1. In terms of biological role, multifunctional enzyme that catalyzes the SAM-dependent methylations of uroporphyrinogen III at position C-2 and C-7 to form precorrin-2 via precorrin-1. Then it catalyzes the NAD-dependent ring dehydrogenation of precorrin-2 to yield sirohydrochlorin. Finally, it catalyzes the ferrochelation of sirohydrochlorin to yield siroheme. In Methylococcus capsulatus (strain ATCC 33009 / NCIMB 11132 / Bath), this protein is Siroheme synthase.